We begin with the raw amino-acid sequence, 1306 residues long: MAVNNEVNNAASETPTDVSSSSQKLATEETALTNGADHEEEDGGEAGGEVFQLTVVLPREPHKIQIIVSSQEAIHDVRQSIIELPGTFQYSCFHLEHKGERINDFVQISEVPGLTADSEIHLVEDPYTEKEARIHIIRVRELIGAAGDRTDTLNGIISGASLLDSVTSKESSQNGTSTAPSHPMVGFDFQGSGNLSTLLPRAQEPGPKTVKSISVSPWNPPPYHLRQKGHLLYLQVTTNEGEQFQITSHVSGFYVNKSSTGKFDPSPKSAPKAHSAHSLLALLSDLSPSFEESFKGLQEYNNAKEPLATFQITNATPSNPWIVPSATAPLVAHQADITRTQENYLIAGIENSETLRDWNEEFQSTRELPKDTVQDRVFRERLTSKLFADYNDAAARGAILVARGEIAPLNPTEGKDAQIFVYNNVFFSFGADGVGTFASEGGDEAARAAVGKDVMGVRMVNQLDIDGLFTPGTVVVDYLGKRIVGQSIVPGIFKQRDPGENQIDYGAVDGKDIVASDEKFVSVFEKLSKALKVKKHAVWDKDAKRHDLEGSIETKGLLGTDGRKYVLDLYRVTPLDITWMEEVGTALDSPKEADAASESAYPHRMTVIRPELVEAYWKVKMREWVNGELERKRQAQKAVEPAAEGKEIEAATEASEPAKSEEPTENGELAKKSESDEAAEPSKPDQERIDIGDFKFALNPDAFSGQQPQTDEEKTEFAEDEQQVRLVCEFLRKTVLPELVKDLKEGDVGFPMDGQSLSRLLHKRGINLRYLGQVATLADGKRLESLRILAVQEMVSRAFKHVAGNYLRYLPIPLTSSCIAHLLNCLLGTDLNAAPKPDVDEAIAALYPEADLKFKEVTPESLKQEIEGQVLRRFRYTLDSTWTAGIKHLQLLREVSLKLGIQLEMKPYHFTKQSQTESAAAPPATNGEATKEAAPTGKSTNGKKKKKNAREASPAAVVSANAASPVTFNPDDILNTVPVIKEASPRSSLAEEALEAGRISLLQDQKKLGQELLLESLSLHEQIYGILHPEVARVYNSLSMLYYQLDEKEAAMELARKAVIVSERTLGVDNAETLLNYLNLGLIAHASGETKLALTYIKHALDLWKVVYGPNHPDSITTINNAAVMLQHLKEYHDSRTWFEASLKICEEVYGKHSINAATLLFQLAQALALDQDSKSAVNRMRESYNIFLTELGAEDKNTKEAEKWLEQLTQNAVSIAKHAKDVQARRNRGIRVSPRVTLGQTQVQPQIGQTVEAAAGRDTPRGLDSRSIDELLKFIEGSDQSNQNKKRPGRSNPKRRGGAAATAGK.

Over residues 1 to 11 (MAVNNEVNNAA) the composition is skewed to low complexity. The tract at residues 1–47 (MAVNNEVNNAASETPTDVSSSSQKLATEETALTNGADHEEEDGGEAG) is disordered. A compositionally biased stretch (polar residues) spans 12–33 (SETPTDVSSSSQKLATEETALT). Residues 336–580 (DITRTQENYL…RVTPLDITWM (245 aa)) form the Clu domain. 2 disordered regions span residues 630–689 (ERKR…QERI) and 912–956 (KQSQ…SPAA). Basic and acidic residues predominate over residues 656 to 689 (EPAKSEEPTENGELAKKSESDEAAEPSKPDQERI). TPR repeat units lie at residues 1032 to 1065 (ARVY…SERT), 1074 to 1107 (LLNY…WKVV), and 1116 to 1149 (ITTI…CEEV). The tract at residues 1275 to 1306 (FIEGSDQSNQNKKRPGRSNPKRRGGAAATAGK) is disordered. A compositionally biased stretch (basic residues) spans 1285-1298 (NKKRPGRSNPKRRG).

This sequence belongs to the CLU family. In terms of assembly, may associate with the eukaryotic translation initiation factor 3 (eIF-3) complex.

The protein resides in the cytoplasm. In terms of biological role, mRNA-binding protein involved in proper cytoplasmic distribution of mitochondria. The polypeptide is Clustered mitochondria protein homolog (Botryotinia fuckeliana (strain B05.10) (Noble rot fungus)).